The sequence spans 136 residues: Nanos homolog 2 (136 aa).

The disordered stretch occupies residues 27-51 (KQRQEGEVAEEPNSRPQEKSEQDLE). The segment covering 28–48 (QRQEGEVAEEPNSRPQEKSEQ) has biased composition (basic and acidic residues). Residues 60–114 (ICNFCKHNGESRHVYTSHQLKTPEGVVVCPILRHYVCPLCGATGDQAHTLKYCPL) form a Nanos-type zinc finger. Positions 61, 64, 77, 88, 96, 99, 107, and 112 each coordinate Zn(2+). Short sequence motifs (C2HC) lie at residues 61-88 (CNFC…VVVC) and 96-112 (CPLC…LKYC).

It belongs to the nanos family. Interacts with CNOT1, CNOT3, CNOT6L, CNOT7 and CNOT9. Predominantly expressed in male germ cells. Expressed in self-renewing spermatogonial stem cells and developing gonads.

It localises to the cytoplasm. The protein resides in the P-body. The protein localises to the perinuclear region. Its function is as follows. Plays a key role in the sexual differentiation of germ cells by promoting the male fate but suppressing the female fate. Represses the female fate pathways by suppressing meiosis, which in turn results in the promotion of the male fate. Maintains the suppression of meiosis by preventing STRA8 expression, which is required for premeiotic DNA replication, after CYP26B1 is decreased. Regulates the localization of the CCR4-NOT deadenylation complex to P-bodies and plays a role in recruiting the complex to trigger the degradation of mRNAs involved in meiosis. Required for the maintenance of the spermatogonial stem cell population. Not essential for the assembly of P-bodies but is required for the maintenance of their normal state. In Mus musculus (Mouse), this protein is Nanos homolog 2 (Nanos2).